The following is a 350-amino-acid chain: Nicotinate-nucleotide--dimethylbenzimidazole phosphoribosyltransferase (350 aa).

The active-site Proton acceptor is the E317.

This sequence belongs to the CobT family.

It catalyses the reaction 5,6-dimethylbenzimidazole + nicotinate beta-D-ribonucleotide = alpha-ribazole 5'-phosphate + nicotinate + H(+). It participates in nucleoside biosynthesis; alpha-ribazole biosynthesis; alpha-ribazole from 5,6-dimethylbenzimidazole: step 1/2. Catalyzes the synthesis of alpha-ribazole-5'-phosphate from nicotinate mononucleotide (NAMN) and 5,6-dimethylbenzimidazole (DMB). In Shewanella sp. (strain W3-18-1), this protein is Nicotinate-nucleotide--dimethylbenzimidazole phosphoribosyltransferase.